Reading from the N-terminus, the 398-residue chain is Cell division protein FtsZ (398 aa).

Residues 24-28 (GAGGN), 111-113 (GTG), E154, R158, and D202 contribute to the GTP site. The segment at 333-381 (GRNNKSETSPISQSEDSEKEKFKWPYSQSESTQDKTLETKPAEQVSEGA) is disordered. The segment covering 364–373 (TQDKTLETKP) has biased composition (basic and acidic residues).

Belongs to the FtsZ family. Homodimer. Polymerizes to form a dynamic ring structure in a strictly GTP-dependent manner. Interacts directly with several other division proteins.

The protein resides in the cytoplasm. Essential cell division protein that forms a contractile ring structure (Z ring) at the future cell division site. The regulation of the ring assembly controls the timing and the location of cell division. One of the functions of the FtsZ ring is to recruit other cell division proteins to the septum to produce a new cell wall between the dividing cells. Binds GTP and shows GTPase activity. The sequence is that of Cell division protein FtsZ from Wolbachia sp.